The following is a 60-amino-acid chain: Cytotoxin 1 (60 aa).

Cystine bridges form between C3–C21, C14–C38, C42–C53, and C54–C59.

It belongs to the three-finger toxin family. Short-chain subfamily. Type IA cytotoxin sub-subfamily. Monomer in solution; Homodimer and oligomer in the presence of negatively charged lipids forming a pore with a size ranging between 20 and 30 Angstroms. In terms of tissue distribution, expressed by the venom gland.

It localises to the secreted. Its subcellular location is the target cell membrane. Produces complete blockade of auricular contraction, which is irreversible at high concentrations. Induces apoptosis in leukemic cells. Possesses anti-arthritic and anti-inflammatory potential. In Naja kaouthia (Monocled cobra), this protein is Cytotoxin 1.